Here is a 212-residue protein sequence, read N- to C-terminus: MKKTLLGSLILLAFATNAADPQVSTETSGKVTFFGKVVENTCKVKTDSKNMSVVLNDVGKNHLKTKKDTAMPTPFTINLENCSTTTTTNNKPVATKVGAYFYSWKNADENNEYTLKNTKSGNDAAQNVNIQLFDANGTDAIEVVGNGTTDFTHSNTNDVATQQTVNKNHISGKATINGENNVKLHYIARYYATAQAEAGKVESSVDFQIAYE.

The first 18 residues, 1-18 (MKKTLLGSLILLAFATNA), serve as a signal peptide directing secretion. Cysteines 42 and 82 form a disulfide.

This sequence belongs to the fimbrial protein family.

It is found in the fimbrium. Mediates adherence to oropharyngeal epithelial cells. Helps the airway colonization process. The protein is Major fimbrial subunit (hifA) of Haemophilus influenzae.